Reading from the N-terminus, the 198-residue chain is Recombination protein RecR (198 aa).

The C4-type zinc finger occupies 56 to 71 (CHVCGNVDTGDPCGIC). Residues 79-174 (RMLCVVEEVA…RLTQLAHGLP (96 aa)) enclose the Toprim domain.

This sequence belongs to the RecR family.

May play a role in DNA repair. It seems to be involved in an RecBC-independent recombinational process of DNA repair. It may act with RecF and RecO. In Rhizorhabdus wittichii (strain DSM 6014 / CCUG 31198 / JCM 15750 / NBRC 105917 / EY 4224 / RW1) (Sphingomonas wittichii), this protein is Recombination protein RecR.